Consider the following 154-residue polypeptide: Large ribosomal subunit protein uL13 (154 aa).

This sequence belongs to the universal ribosomal protein uL13 family. Part of the 50S ribosomal subunit.

Functionally, this protein is one of the early assembly proteins of the 50S ribosomal subunit, although it is not seen to bind rRNA by itself. It is important during the early stages of 50S assembly. This is Large ribosomal subunit protein uL13 from Rhodospirillum rubrum (strain ATCC 11170 / ATH 1.1.1 / DSM 467 / LMG 4362 / NCIMB 8255 / S1).